We begin with the raw amino-acid sequence, 490 residues long: Tektin-3 (490 aa).

Residues T7, T9, and T10 are each glycosylated (O-linked (GalNAc...) threonine). N-linked (GlcNAc...) asparagine glycans are attached at residues N41, N86, N103, N111, N276, and N344. Residues 424–451 (VHEVDDTIQTLQQRLRDAEDTLQSLVHI) adopt a coiled-coil conformation.

Belongs to the tektin family. As to quaternary structure, microtubule inner protein component of sperm flagellar doublet microtubules. Interacts with TEKT1, TEKT2, TEKT4 and TEKT5. Interacts with CCDC38. Post-translationally, N- and O-glycosylated. May be proteolytically processed during the epididymal transit of spermatozoa. In terms of processing, ubiquitinated, leading to its degradation. Deubiquitinated by USP16, promoting its stability. Expressed in spermatozoa. Expressed in airway epithelial cells.

Its subcellular location is the cytoplasm. The protein resides in the cytoskeleton. It localises to the cilium axoneme. It is found in the flagellum axoneme. The protein localises to the cytoplasmic vesicle. Its subcellular location is the secretory vesicle. The protein resides in the acrosome outer membrane. Its function is as follows. Microtubule inner protein (MIP) part of the dynein-decorated doublet microtubules (DMTs) in cilia and flagellar axoneme. Forms filamentous polymers in the walls of ciliary and flagellar microtubules. Required for normal sperm mobility. The chain is Tektin-3 (TEKT3) from Homo sapiens (Human).